The chain runs to 307 residues: UDP-N-acetylenolpyruvoylglucosamine reductase (307 aa).

The FAD-binding PCMH-type domain occupies 34-198 (LGGKADVYIT…LEATFALKKA (165 aa)). The active site involves arginine 177. Serine 227 (proton donor) is an active-site residue. Residue glutamate 297 is part of the active site.

The protein belongs to the MurB family. FAD is required as a cofactor.

It is found in the cytoplasm. The catalysed reaction is UDP-N-acetyl-alpha-D-muramate + NADP(+) = UDP-N-acetyl-3-O-(1-carboxyvinyl)-alpha-D-glucosamine + NADPH + H(+). Its pathway is cell wall biogenesis; peptidoglycan biosynthesis. Its function is as follows. Cell wall formation. The sequence is that of UDP-N-acetylenolpyruvoylglucosamine reductase from Oceanobacillus iheyensis (strain DSM 14371 / CIP 107618 / JCM 11309 / KCTC 3954 / HTE831).